A 252-amino-acid chain; its full sequence is L-aspartate dehydrogenase (252 aa).

Residues Ala-119 and Asn-175 each coordinate NAD(+). His-203 is an active-site residue.

The protein belongs to the L-aspartate dehydrogenase family.

The enzyme catalyses L-aspartate + NADP(+) + H2O = oxaloacetate + NH4(+) + NADPH + H(+). The catalysed reaction is L-aspartate + NAD(+) + H2O = oxaloacetate + NH4(+) + NADH + H(+). It functions in the pathway cofactor biosynthesis; NAD(+) biosynthesis; iminoaspartate from L-aspartate (dehydrogenase route): step 1/1. Its function is as follows. Specifically catalyzes the NAD or NADP-dependent dehydrogenation of L-aspartate to iminoaspartate. The chain is L-aspartate dehydrogenase from Methanospirillum hungatei JF-1 (strain ATCC 27890 / DSM 864 / NBRC 100397 / JF-1).